Here is a 396-residue protein sequence, read N- to C-terminus: L-lactate dehydrogenase (396 aa).

In terms of domain architecture, FMN hydroxy acid dehydrogenase spans 1-380; it reads MIISAASDYR…TQDSLVQGLG (380 aa). Residue Y24 participates in substrate binding. FMN is bound by residues S106 and Q127. Position 129 (Y129) interacts with substrate. T155 is a binding site for FMN. R164 contributes to the substrate binding site. K251 lines the FMN pocket. The Proton acceptor role is filled by H275. A substrate-binding site is contributed by R278. 306–330 is a binding site for FMN; it reads DSGIRNGLDVVRMIALGADTVLLGR.

Belongs to the FMN-dependent alpha-hydroxy acid dehydrogenase family. It depends on FMN as a cofactor.

It is found in the cell inner membrane. It catalyses the reaction (S)-lactate + A = pyruvate + AH2. Functionally, catalyzes the conversion of L-lactate to pyruvate. Is coupled to the respiratory chain. This chain is L-lactate dehydrogenase, found in Escherichia coli O127:H6 (strain E2348/69 / EPEC).